A 137-amino-acid chain; its full sequence is Cytochrome c-type biogenesis protein CcmE (137 aa).

Residues 1–8 (MQKGAKNR) are Cytoplasmic-facing. The chain crosses the membrane as a helical; Signal-anchor for type II membrane protein span at residues 9 to 29 (LITIIICFCSAVIGVSIILYN). The Periplasmic segment spans residues 30–137 (LEKSIVFFVP…NTVIPAKAGI (108 aa)). H120 and Y124 together coordinate heme.

Belongs to the CcmE/CycJ family.

It is found in the cell inner membrane. Heme chaperone required for the biogenesis of c-type cytochromes. Transiently binds heme delivered by CcmC and transfers the heme to apo-cytochromes in a process facilitated by CcmF and CcmH. This is Cytochrome c-type biogenesis protein CcmE from Rickettsia bellii (strain OSU 85-389).